The following is an 81-amino-acid chain: Photosystem I iron-sulfur center (81 aa).

4Fe-4S ferredoxin-type domains lie at 2–31 and 39–68; these read SHSV…MVPW and IASA…VRVY. [4Fe-4S] cluster contacts are provided by C11, C14, C17, C21, C48, C51, C54, and C58.

The eukaryotic PSI reaction center is composed of at least 11 subunits. The cofactor is [4Fe-4S] cluster.

It localises to the plastid. The protein resides in the chloroplast thylakoid membrane. The enzyme catalyses reduced [plastocyanin] + hnu + oxidized [2Fe-2S]-[ferredoxin] = oxidized [plastocyanin] + reduced [2Fe-2S]-[ferredoxin]. Apoprotein for the two 4Fe-4S centers FA and FB of photosystem I (PSI); essential for photochemical activity. FB is the terminal electron acceptor of PSI, donating electrons to ferredoxin. The C-terminus interacts with PsaA/B/D and helps assemble the protein into the PSI complex. Required for binding of PsaD and PsaE to PSI. PSI is a plastocyanin/cytochrome c6-ferredoxin oxidoreductase, converting photonic excitation into a charge separation, which transfers an electron from the donor P700 chlorophyll pair to the spectroscopically characterized acceptors A0, A1, FX, FA and FB in turn. This chain is Photosystem I iron-sulfur center, found in Nephroselmis olivacea (Green alga).